A 22-amino-acid polypeptide reads, in one-letter code: Peptide PGLa-B1 (22 aa).

A Leucine amide modification is found at leucine 22.

Expressed by the skin glands.

The protein resides in the secreted. In terms of biological role, has antibacterial and antifungal activity. In Xenopus borealis (Kenyan clawed frog), this protein is Peptide PGLa-B1.